Reading from the N-terminus, the 264-residue chain is Thymidylate synthase (264 aa).

Position 21 (Arg-21) interacts with dUMP. His-51 lines the (6R)-5,10-methylene-5,6,7,8-tetrahydrofolate pocket. Residue 126–127 (RR) coordinates dUMP. Residue Cys-146 is the Nucleophile of the active site. DUMP-binding positions include 166–169 (RSAD), Asn-177, and 207–209 (HLY). Asp-169 is a (6R)-5,10-methylene-5,6,7,8-tetrahydrofolate binding site. A (6R)-5,10-methylene-5,6,7,8-tetrahydrofolate-binding site is contributed by Ala-263.

This sequence belongs to the thymidylate synthase family. Bacterial-type ThyA subfamily. As to quaternary structure, homodimer.

Its subcellular location is the cytoplasm. It carries out the reaction dUMP + (6R)-5,10-methylene-5,6,7,8-tetrahydrofolate = 7,8-dihydrofolate + dTMP. Its pathway is pyrimidine metabolism; dTTP biosynthesis. Functionally, catalyzes the reductive methylation of 2'-deoxyuridine-5'-monophosphate (dUMP) to 2'-deoxythymidine-5'-monophosphate (dTMP) while utilizing 5,10-methylenetetrahydrofolate (mTHF) as the methyl donor and reductant in the reaction, yielding dihydrofolate (DHF) as a by-product. This enzymatic reaction provides an intracellular de novo source of dTMP, an essential precursor for DNA biosynthesis. The chain is Thymidylate synthase from Aromatoleum aromaticum (strain DSM 19018 / LMG 30748 / EbN1) (Azoarcus sp. (strain EbN1)).